Reading from the N-terminus, the 922-residue chain is uncharacterized protein (922 aa).

Disordered regions lie at residues 459–522 (SLQD…QPKN), 539–627 (SNSA…SSLG), 649–668 (GFSSSRTLGSSSNTQNRQPF), 692–835 (QKLD…VTSL), and 856–879 (PWRKPTVPEPVMSTPITEEQRPER). Positions 546–567 (KAKHSSNKPHKAASSRISKTKS) are enriched in basic residues. Basic and acidic residues predominate over residues 582-600 (KKSEESKQSGKKVKVEEKQ). Low complexity predominate over residues 651–660 (SSSRTLGSSS). The span at 692–702 (QKLDGSAEKEC) shows a compositional bias: basic and acidic residues. Composition is skewed to polar residues over residues 755–779 (DSTNSAQSNAVNPSRPAPTNTSLTG) and 790–824 (KATQPSSANPTQPTVPQSAASRPSAYKTSSCSSLQ). Residues 872 to 899 (TEEQRPEREAMKRKAQQERENAAKYTSL) are a coiled coil.

This is an uncharacterized protein from Homo sapiens (Human).